The sequence spans 498 residues: ATP synthase subunit beta, chloroplastic (498 aa).

172–179 (GGAGVGKT) lines the ATP pocket.

Belongs to the ATPase alpha/beta chains family. In terms of assembly, F-type ATPases have 2 components, CF(1) - the catalytic core - and CF(0) - the membrane proton channel. CF(1) has five subunits: alpha(3), beta(3), gamma(1), delta(1), epsilon(1). CF(0) has four main subunits: a(1), b(1), b'(1) and c(9-12).

The protein resides in the plastid. It localises to the chloroplast thylakoid membrane. It catalyses the reaction ATP + H2O + 4 H(+)(in) = ADP + phosphate + 5 H(+)(out). In terms of biological role, produces ATP from ADP in the presence of a proton gradient across the membrane. The catalytic sites are hosted primarily by the beta subunits. The polypeptide is ATP synthase subunit beta, chloroplastic (Salacca zalacca (Snake palm)).